Consider the following 422-residue polypeptide: Histidine--tRNA ligase (422 aa).

Belongs to the class-II aminoacyl-tRNA synthetase family. Homodimer.

Its subcellular location is the cytoplasm. The catalysed reaction is tRNA(His) + L-histidine + ATP = L-histidyl-tRNA(His) + AMP + diphosphate + H(+). This is Histidine--tRNA ligase from Nocardia farcinica (strain IFM 10152).